A 226-amino-acid chain; its full sequence is Large ribosomal subunit protein uL1 (226 aa).

The protein belongs to the universal ribosomal protein uL1 family. As to quaternary structure, part of the 50S ribosomal subunit.

Binds directly to 23S rRNA. The L1 stalk is quite mobile in the ribosome, and is involved in E site tRNA release. In terms of biological role, protein L1 is also a translational repressor protein, it controls the translation of the L11 operon by binding to its mRNA. In Borreliella afzelii (strain PKo) (Borrelia afzelii), this protein is Large ribosomal subunit protein uL1.